A 312-amino-acid chain; its full sequence is Fibrinogen-like protein 1 (312 aa).

A signal peptide spans Met1–Ala22. Residues Leu39–Val60 are a coiled coil. Residues Leu74–Asp306 enclose the Fibrinogen C-terminal domain. 2 cysteine pairs are disulfide-bonded: Cys83-Cys112 and Cys248-Cys261.

As to quaternary structure, homodimer. Interacts (via the Fibrinogen C-terminal domain) with LAG3 (via Ig-like domains 1 and 2).

It is found in the secreted. Its function is as follows. Immune suppressive molecule that inhibits antigen-specific T-cell activation by acting as a major ligand of LAG3. Responsible for LAG3 T-cell inhibitory function. Binds LAG3 independently from MHC class II (MHC-II). Secreted by, and promotes growth of, hepatocytes. The protein is Fibrinogen-like protein 1 (FGL1) of Bos taurus (Bovine).